A 552-amino-acid polypeptide reads, in one-letter code: 5'-AMP-activated protein kinase catalytic subunit alpha-2 (552 aa).

The Protein kinase domain occupies 16–268 (YVLGDTLGVG…IKDIREHEWF (253 aa)). ATP contacts are provided by residues 22–30 (LGVGTFGKV) and lysine 45. The active-site Proton acceptor is aspartate 139. Threonine 172 is modified (phosphothreonine; by LKB1 and CaMKK2). Threonine 258 is modified (phosphothreonine). The interval 291 to 376 (EAVKEVCEKF…PERMPPLIAD (86 aa)) is AIS. Serine 377 bears the Phosphoserine mark. Residues 478–520 (EQRSGSSTPQRSCSAAGLHRPRSSVDSSTAENHSLSGSLTGSL) are disordered. Positions 480–490 (RSGSSTPQRSC) are enriched in polar residues. Serine 491 is modified (phosphoserine). A compositionally biased stretch (polar residues) spans 501–510 (SVDSSTAENH). Low complexity predominate over residues 511 to 520 (SLSGSLTGSL).

This sequence belongs to the protein kinase superfamily. CAMK Ser/Thr protein kinase family. SNF1 subfamily. As to quaternary structure, AMPK is a heterotrimer of an alpha catalytic subunit (PRKAA1 or PRKAA2), a beta (PRKAB1 or PRKAB2) and a gamma non-catalytic subunits (PRKAG1, PRKAG2 or PRKAG3). Interacts with FNIP1 and FNIP2. Associates with internalized INSR complexes on Golgi/endosomal membranes; PRKAA2/AMPK2 together with ATIC and HACD3/PTPLAD1 is proposed to be part of a signaling network regulating INSR autophosphorylation and endocytosis. Interacts with DUSP29. Interacts with ARF6. The phosphorylated form at Thr-172 mediated by CamKK2 interacts with ACSS2. It depends on Mg(2+) as a cofactor. In terms of processing, ubiquitinated. Phosphorylated at Thr-172 by STK11/LKB1 in complex with STE20-related adapter-alpha (STRADA) pseudo kinase and CAB39. Also phosphorylated at Thr-172 by CAMKK2; triggered by a rise in intracellular calcium ions, without detectable changes in the AMP/ATP ratio. CAMKK1 can also phosphorylate Thr-172, but at much lower level. Dephosphorylated by protein phosphatase 2A and 2C (PP2A and PP2C). Phosphorylated by ULK1; leading to negatively regulate AMPK activity and suggesting the existence of a regulatory feedback loop between ULK1 and AMPK. Dephosphorylated by PPM1A and PPM1B at Thr-172 (mediated by STK11/LKB1). Skeletal muscle, lower levels in liver, heart and kidney.

Its subcellular location is the cytoplasm. The protein localises to the nucleus. The catalysed reaction is L-seryl-[protein] + ATP = O-phospho-L-seryl-[protein] + ADP + H(+). It carries out the reaction L-threonyl-[protein] + ATP = O-phospho-L-threonyl-[protein] + ADP + H(+). It catalyses the reaction L-seryl-[acetyl-CoA carboxylase] + ATP = O-phospho-L-seryl-[acetyl-CoA carboxylase] + ADP + H(+). The enzyme catalyses L-seryl-[3-hydroxy-3-methylglutaryl-coenzyme A reductase] + ATP = O-phospho-L-seryl-[3-hydroxy-3-methylglutaryl-coenzyme A reductase] + ADP + H(+). Activated by phosphorylation on Thr-172. Binding of AMP to non-catalytic gamma subunit (PRKAG1, PRKAG2 or PRKAG3) results in allosteric activation, inducing phosphorylation on Thr-172. AMP-binding to gamma subunit also sustains activity by preventing dephosphorylation of Thr-172. ADP also stimulates Thr-172 phosphorylation, without stimulating already phosphorylated AMPK. ATP promotes dephosphorylation of Thr-172, rendering the enzyme inactive. Under physiological conditions AMPK mainly exists in its inactive form in complex with ATP, which is much more abundant than AMP. Selectively inhibited by compound C (6-[4-(2-Piperidin-1-yl-ethoxy)-phenyl)]-3-pyridin-4-yl-pyyrazolo[1,5-a] pyrimidine. Activated by resveratrol, a natural polyphenol present in red wine, and S17834, a synthetic polyphenol. Salicylate/aspirin directly activates kinase activity, primarily by inhibiting Thr-172 dephosphorylation. Its function is as follows. Catalytic subunit of AMP-activated protein kinase (AMPK), an energy sensor protein kinase that plays a key role in regulating cellular energy metabolism. In response to reduction of intracellular ATP levels, AMPK activates energy-producing pathways and inhibits energy-consuming processes: inhibits protein, carbohydrate and lipid biosynthesis, as well as cell growth and proliferation. AMPK acts via direct phosphorylation of metabolic enzymes, and by longer-term effects via phosphorylation of transcription regulators. Regulates lipid synthesis by phosphorylating and inactivating lipid metabolic enzymes such as ACACA, ACACB, GYS1, HMGCR and LIPE; regulates fatty acid and cholesterol synthesis by phosphorylating acetyl-CoA carboxylase (ACACA and ACACB) and hormone-sensitive lipase (LIPE) enzymes, respectively. Promotes lipolysis of lipid droplets by mediating phosphorylation of isoform 1 of CHKA (CHKalpha2). Regulates insulin-signaling and glycolysis by phosphorylating IRS1, PFKFB2 and PFKFB3. Involved in insulin receptor/INSR internalization. AMPK stimulates glucose uptake in muscle by increasing the translocation of the glucose transporter SLC2A4/GLUT4 to the plasma membrane, possibly by mediating phosphorylation of TBC1D4/AS160. Regulates transcription and chromatin structure by phosphorylating transcription regulators involved in energy metabolism such as CRTC2/TORC2, FOXO3, histone H2B, HDAC5, MEF2C, MLXIPL/ChREBP, EP300, HNF4A, p53/TP53, SREBF1, SREBF2 and PPARGC1A. Acts as a key regulator of glucose homeostasis in liver by phosphorylating CRTC2/TORC2, leading to CRTC2/TORC2 sequestration in the cytoplasm. In response to stress, phosphorylates 'Ser-36' of histone H2B (H2BS36ph), leading to promote transcription. Acts as a key regulator of cell growth and proliferation by phosphorylating FNIP1, TSC2, RPTOR, WDR24 and ATG1/ULK1: in response to nutrient limitation, negatively regulates the mTORC1 complex by phosphorylating RPTOR component of the mTORC1 complex and by phosphorylating and activating TSC2. Also phosphorylates and inhibits GATOR2 subunit WDR24 in response to nutrient limitation, leading to suppress glucose-mediated mTORC1 activation. In response to energetic stress, phosphorylates FNIP1, inactivating the non-canonical mTORC1 signaling, thereby promoting nuclear translocation of TFEB and TFE3, and inducing transcription of lysosomal or autophagy genes. In response to nutrient limitation, promotes autophagy by phosphorylating and activating ATG1/ULK1. In that process, it also activates WDR45/WIPI4. Phosphorylates CASP6, thereby preventing its autoprocessing and subsequent activation. AMPK also acts as a regulator of circadian rhythm by mediating phosphorylation of CRY1, leading to destabilize it. May regulate the Wnt signaling pathway by phosphorylating CTNNB1, leading to stabilize it. Also acts as a regulator of cellular polarity by remodeling the actin cytoskeleton; probably by indirectly activating myosin. Also phosphorylates CFTR, EEF2K, KLC1, NOS3 and SLC12A1. Plays an important role in the differential regulation of pro-autophagy (composed of PIK3C3, BECN1, PIK3R4 and UVRAG or ATG14) and non-autophagy (composed of PIK3C3, BECN1 and PIK3R4) complexes, in response to glucose starvation. Can inhibit the non-autophagy complex by phosphorylating PIK3C3 and can activate the pro-autophagy complex by phosphorylating BECN1. Upon glucose starvation, promotes ARF6 activation in a kinase-independent manner leading to cell migration. Upon glucose deprivation mediates the phosphorylation of ACSS2 at 'Ser-659', which exposes the nuclear localization signal of ACSS2, required for its interaction with KPNA1 and nuclear translocation. Upon stress, regulates mitochondrial fragmentation through phosphorylation of MTFR1L. The sequence is that of 5'-AMP-activated protein kinase catalytic subunit alpha-2 (Prkaa2) from Rattus norvegicus (Rat).